We begin with the raw amino-acid sequence, 752 residues long: Myotubularin-related protein 10 (752 aa).

Residues 206–636 (FDCSSDWDRE…SHLSVWKLYF (431 aa)) form the Myotubularin phosphatase domain. The stretch at 652–683 (TAFHKLSVLTDEIEMLQNQLRQYKGAAGTANT) forms a coiled coil.

The protein belongs to the protein-tyrosine phosphatase family. Non-receptor class myotubularin subfamily.

This chain is Myotubularin-related protein 10 (mtmr10), found in Danio rerio (Zebrafish).